The chain runs to 169 residues: Cell cycle link protein (169 aa).

The interval 9–22 is binding to host SKP1 protein; it reads LPLELREKIVRDHL. Residues 110–114 carry the LXCXE motif, interaction with host RBR motif; that stretch reads LSCGE.

It belongs to the nanovirus Clink protein family. As to quaternary structure, interacts with host SKP1. Interacts (via LXCXE domain) with host retinoblastoma-related protein 1 (RBR1). Interacts (via LXCXE domain) with retinoblastoma-related proteins (RBR).

Functionally, interacts with and disrupts the function of host retinoblastoma-related proteins RBR, which are key regulators of the cell cycle. Induces transcriptional activation of E2F-regulated S-phase and G2/M-phase-specific genes. Inactivation of the ability of RBR to arrest the cell cycle leads to the stimulation of viral DNA replication. The protein is Cell cycle link protein (DNA-C) of Astragalus sinicus (Chinese milk vetch).